The primary structure comprises 757 residues: 5-methyltetrahydropteroyltriglutamate--homocysteine methyltransferase (757 aa).

5-methyltetrahydropteroyltri-L-glutamate contacts are provided by residues 15–18 and Lys-114; that span reads RELK. Residues 428–430 and Glu-481 contribute to the L-homocysteine site; that span reads IGS. L-methionine-binding positions include 428–430 and Glu-481; that span reads IGS. 5-methyltetrahydropteroyltri-L-glutamate-binding positions include 512-513 and Trp-558; that span reads RC. Position 596 (Asp-596) interacts with L-homocysteine. L-methionine is bound at residue Asp-596. Residue Glu-602 participates in 5-methyltetrahydropteroyltri-L-glutamate binding. Residues His-639, Cys-641, and Glu-663 each contribute to the Zn(2+) site. Residue His-692 is the Proton donor of the active site. Cys-724 provides a ligand contact to Zn(2+).

Belongs to the vitamin-B12 independent methionine synthase family. The cofactor is Zn(2+).

It catalyses the reaction 5-methyltetrahydropteroyltri-L-glutamate + L-homocysteine = tetrahydropteroyltri-L-glutamate + L-methionine. It functions in the pathway amino-acid biosynthesis; L-methionine biosynthesis via de novo pathway; L-methionine from L-homocysteine (MetE route): step 1/1. Catalyzes the transfer of a methyl group from 5-methyltetrahydrofolate to homocysteine resulting in methionine formation. The protein is 5-methyltetrahydropteroyltriglutamate--homocysteine methyltransferase of Lactococcus lactis subsp. cremoris (strain MG1363).